A 254-amino-acid chain; its full sequence is MLLVIDVGNTNTVLGVFDGEELVHDWRIRTVIENTVDEYGMLMYNLYKTSKISSKAIQHIIISCVVPPMLNILEPVCEKYFQVKPLIVGPGIKTGMPIFYDNPKEVGADRIVNAVAVFEKYKREAIVVDFGTATTFDYVSPRGEYMGGCIAPGIVISSEALFTRASKLPRVEFSTPKLIIAKDTVSSMQAGIIYGYAGLVDGIVARMKEEIGSNPLVIATGGLAKVVKPETRSIEMIDDMLTLEGLRLIYKRNS.

An ATP-binding site is contributed by 6 to 13 (DVGNTNTV). Residues Y100 and 107-110 (GADR) each bind substrate. The active-site Proton acceptor is the D109. D129 is a K(+) binding site. T132 contributes to the ATP binding site. Residue T184 participates in substrate binding.

The protein belongs to the type III pantothenate kinase family. In terms of assembly, homodimer. NH4(+) serves as cofactor. Requires K(+) as cofactor.

The protein resides in the cytoplasm. The catalysed reaction is (R)-pantothenate + ATP = (R)-4'-phosphopantothenate + ADP + H(+). It functions in the pathway cofactor biosynthesis; coenzyme A biosynthesis; CoA from (R)-pantothenate: step 1/5. Functionally, catalyzes the phosphorylation of pantothenate (Pan), the first step in CoA biosynthesis. The polypeptide is Type III pantothenate kinase (Syntrophus aciditrophicus (strain SB)).